A 201-amino-acid chain; its full sequence is MFDGNPGRRRLVLASGSPRRREMIAGLGCEFSIASADIDESVRPSEAAADYVERLAKEKATAVFEARGDQQDIVVLGADTTVVAGGDILGKPVDFDDAKAMLRRLSGTWHEVLTSVALVAAEGCKVTTTLSRVRFRELSEQEIQRYWDSGEPADKAGAYGIQGLAGSFVERVEGSYSSIVGLPLCETVVLLKEFGIKIWSD.

Residue Asp79 is the Proton acceptor of the active site.

Belongs to the Maf family. YhdE subfamily. Requires a divalent metal cation as cofactor.

The protein localises to the cytoplasm. The enzyme catalyses dTTP + H2O = dTMP + diphosphate + H(+). The catalysed reaction is UTP + H2O = UMP + diphosphate + H(+). Functionally, nucleoside triphosphate pyrophosphatase that hydrolyzes dTTP and UTP. May have a dual role in cell division arrest and in preventing the incorporation of modified nucleotides into cellular nucleic acids. This Hahella chejuensis (strain KCTC 2396) protein is dTTP/UTP pyrophosphatase.